A 562-amino-acid polypeptide reads, in one-letter code: uncharacterized protein (562 aa).

A run of 5 helical transmembrane segments spans residues 10–27, 34–53, 63–85, 92–114, and 155–177; these read IYPE…YWVG, FSLG…GQFD, IFFL…QGIA, ALFA…KIAG, and FSVI…AIVL. RCK C-terminal domains follow at residues 204–288 and 290–377; these read TENA…HPDS and DETQ…QLGV. The next 6 helical transmembrane spans lie at 387–404, 408–430, 443–465, 475–497, 504–526, and 539–561; these read VAFW…GSLV, GNLP…FSWV, PTVW…ISAG, LGFS…AALV, FHPA…LGMI, and YTIT…ILIL.

It belongs to the AAE transporter (TC 2.A.81) family.

It is found in the cell membrane. This is an uncharacterized protein from Shewanella oneidensis (strain ATCC 700550 / JCM 31522 / CIP 106686 / LMG 19005 / NCIMB 14063 / MR-1).